A 144-amino-acid chain; its full sequence is Bacilliredoxin SSP1311 (144 aa).

The protein belongs to the bacilliredoxin family.

This Staphylococcus saprophyticus subsp. saprophyticus (strain ATCC 15305 / DSM 20229 / NCIMB 8711 / NCTC 7292 / S-41) protein is Bacilliredoxin SSP1311.